The following is a 471-amino-acid chain: N(6)-adenine-specific methyltransferase METTL4 (471 aa).

This sequence belongs to the MT-A70-like family.

The protein localises to the nucleus. It carries out the reaction a 2'-O-methyladenosine in U2 snRNA + S-adenosyl-L-methionine = an N(6)-methyl-2'-O-methyladenosine in U2 snRNA + S-adenosyl-L-homocysteine + H(+). The enzyme catalyses a 2'-deoxyadenosine in DNA + S-adenosyl-L-methionine = an N(6)-methyl-2'-deoxyadenosine in DNA + S-adenosyl-L-homocysteine + H(+). In terms of biological role, n(6)-adenine-specific methyltransferase that can methylate both RNAs and DNA. Acts as a N(6)-adenine-specific RNA methyltransferase by catalyzing formation of N6,2'-O-dimethyladenosine (m6A(m)) on internal positions of U2 small nuclear RNA (snRNA): methylates the 6th position of adenine residues with a pre-deposited 2'-O-methylation. Internal m6A(m) methylation of snRNAs regulates RNA splicing. Also able to act as a N(6)-adenine-specific DNA methyltransferase by mediating methylation of DNA on the 6th position of adenine (N(6)-methyladenosine). The existence of N(6)-methyladenosine (m6A) on DNA is however unclear in mammals, and additional evidences are required to confirm the role of the N(6)-adenine-specific DNA methyltransferase activity of METTL4 in vivo. Acts as a regulator of mitochondrial transcript levels and mitochondrial DNA (mtDNA) copy number by mediating mtDNA N(6)-methylation: m6A on mtDNA reduces transcription by repressing TFAM DNA-binding and bending. N(6)-methyladenosine deposition by METTL4 regulates Polycomb silencing by triggering ubiquitination and degradation of sensor proteins ASXL1 and MPND, leading to inactivation of the PR-DUB complex and subsequent preservation of Polycomb silencing. The chain is N(6)-adenine-specific methyltransferase METTL4 from Mus musculus (Mouse).